The sequence spans 96 residues: Large ribosomal subunit protein eL21 (96 aa).

Positions 1-22 are disordered; that stretch reads MRKSKGFKSRSRYKLKRSIRPK.

It belongs to the eukaryotic ribosomal protein eL21 family.

The chain is Large ribosomal subunit protein eL21 from Methanosphaera stadtmanae (strain ATCC 43021 / DSM 3091 / JCM 11832 / MCB-3).